Consider the following 796-residue polypeptide: Quinoprotein glucose dehydrogenase (796 aa).

Topologically, residues 1 to 10 (MAINNTGSRR) are cytoplasmic. A helical transmembrane segment spans residues 11 to 37 (LLVTLTALFAALCGLYLLIGGGWLVAI). At 38–40 (GGS) the chain is on the periplasmic side. The chain crosses the membrane as a helical span at residues 41 to 58 (WYYPIAGLVMLGVAWMLW). At 59-62 (RSKR) the chain is on the cytoplasmic side. Residues 63-81 (AALWLYAALLLGTMIWGVW) form a helical membrane-spanning segment. At 82 to 95 (EVGFDFWALTPRSD) the chain is on the periplasmic side. The chain crosses the membrane as a helical span at residues 96 to 110 (ILVFFGIWLILPFVW). Over 111–118 (RRLVIPAS) the chain is Cytoplasmic. Residues 119 to 141 (GAVAALVVALLISGGILTWAGFN) traverse the membrane as a helical segment. The Periplasmic segment spans residues 142–796 (DPQEINGTLS…VAYALPDDVK (655 aa)). Asp466 functions as the Proton acceptor in the catalytic mechanism.

Belongs to the bacterial PQQ dehydrogenase family. In terms of assembly, monomer. Requires pyrroloquinoline quinone as cofactor.

The protein localises to the cell inner membrane. It catalyses the reaction a ubiquinone + D-glucose = D-glucono-1,5-lactone + a ubiquinol. Functionally, GDH is probably involved in energy conservation rather than in sugar metabolism. This chain is Quinoprotein glucose dehydrogenase (gcd), found in Escherichia coli (strain K12).